Here is an 837-residue protein sequence, read N- to C-terminus: Granulocyte colony-stimulating factor receptor (837 aa).

The N-terminal stretch at 1 to 25 (MVGLGACTLTGVTLIFLLLPRSLES) is a signal peptide. 2 cysteine pairs are disulfide-bonded: C26-C52 and C46-C102. Positions 26–118 (CGHIEISPPV…SVQLLDQAEL (93 aa)) constitute an Ig-like C2-type domain. Topologically, residues 26 to 626 (CGHIEISPPV…LTLRTLDPSD (601 aa)) are extracellular. Residues N51, N94, and N129 are each glycosylated (N-linked (GlcNAc...) asparagine). 5 Fibronectin type-III domains span residues 126–231 (SPSN…LEPP), 236–331 (LDIG…LRPT), 334–433 (APTI…NEGP), 434–529 (AVTG…GERA), and 530–624 (PPHA…TLDP). Cystine bridges form between C132–C143, C168–C219, C178–C187, C249–C296, and C267–C310. 2 N-linked (GlcNAc...) asparagine glycosylation sites follow: N186 and N279. A WSXWS motif motif is present at residues 319-323 (WSPWS). N392, N408, N474, N487, N582, and N613 each carry an N-linked (GlcNAc...) asparagine glycan. A helical transmembrane segment spans residues 627–650 (LNIFLGILCLVLLSTTCVVTWLCC). The Cytoplasmic portion of the chain corresponds to 651–837 (KRRGKTSFWS…VHGVEEQGGF (187 aa)). The Box 1 motif signature appears at 658–666 (FWSDVPDPA).

It belongs to the type I cytokine receptor family. Type 2 subfamily. In terms of assembly, homodimer. The dimeric receptor binds two CSF3 molecules. Interacts with CEACAM1; down-regulates the CSF3R-STAT3 pathway through recruitment of PTPN6 that dephosphorylates CSF3R. Post-translationally, N-glycosylated. As to expression, found in bone marrow.

It is found in the membrane. Its function is as follows. Receptor for granulocyte colony-stimulating factor (CSF3). In addition it may function in some adhesion or recognition events at the cell surface. The protein is Granulocyte colony-stimulating factor receptor (Csf3r) of Mus musculus (Mouse).